The sequence spans 584 residues: MPETIGVFVAWPYANGDLHLGHVAGVYIPADTFARYHRLRGNRVLMVSGSDAHGTPITVAAEREGVTPEDIFRRYHGRFLETYQQLGISFDLFTHTHTANHFRVAQDIFRTLYEKGYIFTQTQIQLYCEYDRRFLPDRYVEGTCPYCGYPNARGDQCDNCGRTLDAIDLIDPRCRLCGQRPLPRETEHFFFDLPAFTDRLLAYLERQTHWRPNVQHFVRNFIQDGLKPRPVSRDLEWGIPLPIPGYEHKVMYVWFEAVIGYLSASIEWSLAEGQPEVWQVWWRDPRARGYYFIGKDNIPFHAIIWPAELMGYDESLNLPYDIPANEFLNLEGQQFSTSRNWAIWVPDFLSRYAPDPLRDYLTSIAPETRDSEFTWQGFVERNNNELLATWGNLVHRILTFVQARFEGRVPEPGALDGRDHLLLDQIAAGFQRIGDLYARVELKAAQREAMALAREVNRYLDEKAPWFQIREDRAAAATTLFVALRAIDSLKLLLAPILPFTSEQLHRLLGYRDRLFGDIVIEPGPETGGHEVLRYRPAASEGRDRWAPSELEAGRPLPPPQPLYQKLEESVIEEERQRLLAQSR.

The 'HIGH' region signature appears at 12-22; the sequence is PYANGDLHLGH. Positions 144, 147, 157, and 160 each coordinate Zn(2+). The 'KMSKS' region signature appears at 334–338; the sequence is QFSTS. T337 is an ATP binding site. A disordered region spans residues 541-563; that stretch reads EGRDRWAPSELEAGRPLPPPQPL.

Belongs to the class-I aminoacyl-tRNA synthetase family. MetG type 1 subfamily. Monomer. The cofactor is Zn(2+).

It localises to the cytoplasm. The enzyme catalyses tRNA(Met) + L-methionine + ATP = L-methionyl-tRNA(Met) + AMP + diphosphate. Is required not only for elongation of protein synthesis but also for the initiation of all mRNA translation through initiator tRNA(fMet) aminoacylation. This is Methionine--tRNA ligase from Thermomicrobium roseum (strain ATCC 27502 / DSM 5159 / P-2).